Consider the following 370-residue polypeptide: Histidinol-phosphate aminotransferase (370 aa).

Lys-231 carries the N6-(pyridoxal phosphate)lysine modification.

This sequence belongs to the class-II pyridoxal-phosphate-dependent aminotransferase family. Histidinol-phosphate aminotransferase subfamily. In terms of assembly, homodimer. Requires pyridoxal 5'-phosphate as cofactor.

The enzyme catalyses L-histidinol phosphate + 2-oxoglutarate = 3-(imidazol-4-yl)-2-oxopropyl phosphate + L-glutamate. It participates in amino-acid biosynthesis; L-histidine biosynthesis; L-histidine from 5-phospho-alpha-D-ribose 1-diphosphate: step 7/9. This is Histidinol-phosphate aminotransferase from Paracidovorax citrulli (strain AAC00-1) (Acidovorax citrulli).